The sequence spans 381 residues: Queuine tRNA-ribosyltransferase (381 aa).

The Proton acceptor role is filled by D96. Substrate contacts are provided by residues 96–100 (DSGGF), D150, Q193, and G220. Residues 251 to 257 (GVGSPDS) form an RNA binding region. D270 serves as the catalytic Nucleophile. The interval 275–279 (TRIAR) is RNA binding; important for wobble base 34 recognition. Zn(2+) is bound by residues C308, C310, C313, and H339.

The protein belongs to the queuine tRNA-ribosyltransferase family. Homodimer. Within each dimer, one monomer is responsible for RNA recognition and catalysis, while the other monomer binds to the replacement base PreQ1. Zn(2+) serves as cofactor.

The catalysed reaction is 7-aminomethyl-7-carbaguanine + guanosine(34) in tRNA = 7-aminomethyl-7-carbaguanosine(34) in tRNA + guanine. Its pathway is tRNA modification; tRNA-queuosine biosynthesis. Its function is as follows. Catalyzes the base-exchange of a guanine (G) residue with the queuine precursor 7-aminomethyl-7-deazaguanine (PreQ1) at position 34 (anticodon wobble position) in tRNAs with GU(N) anticodons (tRNA-Asp, -Asn, -His and -Tyr). Catalysis occurs through a double-displacement mechanism. The nucleophile active site attacks the C1' of nucleotide 34 to detach the guanine base from the RNA, forming a covalent enzyme-RNA intermediate. The proton acceptor active site deprotonates the incoming PreQ1, allowing a nucleophilic attack on the C1' of the ribose to form the product. After dissociation, two additional enzymatic reactions on the tRNA convert PreQ1 to queuine (Q), resulting in the hypermodified nucleoside queuosine (7-(((4,5-cis-dihydroxy-2-cyclopenten-1-yl)amino)methyl)-7-deazaguanosine). The chain is Queuine tRNA-ribosyltransferase from Lysinibacillus sphaericus (strain C3-41).